The sequence spans 287 residues: Large ribosomal subunit protein uL2 (287 aa).

The segment at 221–287 (RGSVMNPCDH…SKRSRGGRDS (67 aa)) is disordered. Basic residues predominate over residues 258 to 287 (KTRKKNKPSNKLVVRRRRRISKRSRGGRDS).

Belongs to the universal ribosomal protein uL2 family. As to quaternary structure, part of the 50S ribosomal subunit. Forms a bridge to the 30S subunit in the 70S ribosome.

In terms of biological role, one of the primary rRNA binding proteins. Required for association of the 30S and 50S subunits to form the 70S ribosome, for tRNA binding and peptide bond formation. It has been suggested to have peptidyltransferase activity; this is somewhat controversial. Makes several contacts with the 16S rRNA in the 70S ribosome. This chain is Large ribosomal subunit protein uL2, found in Prochlorococcus marinus (strain MIT 9301).